Here is a 368-residue protein sequence, read N- to C-terminus: Agmatine deiminase (368 aa).

Cysteine 357 serves as the catalytic Amidino-cysteine intermediate.

This sequence belongs to the agmatine deiminase family. In terms of assembly, homodimer.

It carries out the reaction agmatine + H2O = N-carbamoylputrescine + NH4(+). Its pathway is amine and polyamine biosynthesis; putrescine biosynthesis via agmatine pathway; N-carbamoylputrescine from agmatine: step 1/1. Mediates the hydrolysis of agmatine into N-carbamoylputrescine in the arginine decarboxylase (ADC) pathway of putrescine biosynthesis, a basic polyamine. The sequence is that of Agmatine deiminase from Pseudomonas putida (strain ATCC 700007 / DSM 6899 / JCM 31910 / BCRC 17059 / LMG 24140 / F1).